Consider the following 133-residue polypeptide: MATSRRVSRVSSLIKREVSQMLLHEIKDDRVGTGMVSVTEVEVSGDLQHAKIFVSIYGSPEAKASTMAGLHSAAPFVRRELGQRMRLRRTPEVSFLEDRSLERGDKILNLLNNLPQAIATEDLEDDDSGLALD.

The protein belongs to the RbfA family. In terms of assembly, monomer. Binds 30S ribosomal subunits, but not 50S ribosomal subunits or 70S ribosomes.

The protein resides in the cytoplasm. Its function is as follows. One of several proteins that assist in the late maturation steps of the functional core of the 30S ribosomal subunit. Associates with free 30S ribosomal subunits (but not with 30S subunits that are part of 70S ribosomes or polysomes). Required for efficient processing of 16S rRNA. May interact with the 5'-terminal helix region of 16S rRNA. In Synechocystis sp. (strain ATCC 27184 / PCC 6803 / Kazusa), this protein is Ribosome-binding factor A.